A 957-amino-acid polypeptide reads, in one-letter code: Glycine dehydrogenase (decarboxylating) (957 aa).

The residue at position 708 (Lys-708) is an N6-(pyridoxal phosphate)lysine.

Belongs to the GcvP family. In terms of assembly, the glycine cleavage system is composed of four proteins: P, T, L and H. Requires pyridoxal 5'-phosphate as cofactor.

It carries out the reaction N(6)-[(R)-lipoyl]-L-lysyl-[glycine-cleavage complex H protein] + glycine + H(+) = N(6)-[(R)-S(8)-aminomethyldihydrolipoyl]-L-lysyl-[glycine-cleavage complex H protein] + CO2. In terms of biological role, the glycine cleavage system catalyzes the degradation of glycine. The P protein binds the alpha-amino group of glycine through its pyridoxal phosphate cofactor; CO(2) is released and the remaining methylamine moiety is then transferred to the lipoamide cofactor of the H protein. The polypeptide is Glycine dehydrogenase (decarboxylating) (Escherichia coli O6:H1 (strain CFT073 / ATCC 700928 / UPEC)).